The following is a 513-amino-acid chain: Proline-rich receptor-like protein kinase PERK3 (513 aa).

Residues 1–123 (MARSNRCVPQ…SPPSPSRLST (123 aa)) are Extracellular-facing. Asparagine 11 is a glycosylation site (N-linked (GlcNAc...) asparagine). Polar residues predominate over residues 27-36 (LKSRWQQITM). The tract at residues 27-119 (LKSRWQQITM…GFSLSPPSPS (93 aa)) is disordered. An N-linked (GlcNAc...) asparagine glycan is attached at asparagine 66. The segment covering 78-89 (PSTSTPPRLGNR) has biased composition (low complexity). A compositionally biased stretch (polar residues) spans 99–111 (GQEPTTPTMTPGF). The chain crosses the membrane as a helical span at residues 124–144 (GAVVGISIGGGVFVLTLIFFL). Residues 145 to 513 (CKKKRPRDDK…TAQRYGGDSL (369 aa)) are Cytoplasmic-facing. At threonine 172 the chain carries Phosphothreonine. The region spanning 183–334 (FSEANLLGEG…DFGLAKIALD (152 aa)) is the Protein kinase domain. ATP-binding positions include 189 to 197 (LGEGGFGFV) and lysine 211. At tyrosine 256 the chain carries Phosphotyrosine. Catalysis depends on aspartate 307, which acts as the Proton acceptor. Residue serine 340 is modified to Phosphoserine. 2 positions are modified to phosphothreonine: threonine 341 and threonine 346. The residue at position 354 (tyrosine 354) is a Phosphotyrosine.

It belongs to the protein kinase superfamily. Ser/Thr protein kinase family. In terms of tissue distribution, expressed at low levels in inflorescence bolt, flower buds, siliques, roots, seedlings and leaves.

The protein resides in the cell membrane. It catalyses the reaction L-seryl-[protein] + ATP = O-phospho-L-seryl-[protein] + ADP + H(+). The catalysed reaction is L-threonyl-[protein] + ATP = O-phospho-L-threonyl-[protein] + ADP + H(+). This is Proline-rich receptor-like protein kinase PERK3 (PERK3) from Arabidopsis thaliana (Mouse-ear cress).